The chain runs to 455 residues: UDP-N-acetylmuramoylalanine--D-glutamate ligase (455 aa).

118–124 is a binding site for ATP; it reads GSNAKST.

The protein belongs to the MurCDEF family.

The protein resides in the cytoplasm. The enzyme catalyses UDP-N-acetyl-alpha-D-muramoyl-L-alanine + D-glutamate + ATP = UDP-N-acetyl-alpha-D-muramoyl-L-alanyl-D-glutamate + ADP + phosphate + H(+). Its pathway is cell wall biogenesis; peptidoglycan biosynthesis. Cell wall formation. Catalyzes the addition of glutamate to the nucleotide precursor UDP-N-acetylmuramoyl-L-alanine (UMA). This is UDP-N-acetylmuramoylalanine--D-glutamate ligase from Chromohalobacter salexigens (strain ATCC BAA-138 / DSM 3043 / CIP 106854 / NCIMB 13768 / 1H11).